Here is a 742-residue protein sequence, read N- to C-terminus: Zinc finger MYND domain-containing protein 15 (742 aa).

Residues 109–199 (LEDGEEGEEE…QKRKGQRSEA (91 aa)) are disordered. The segment covering 110–127 (EDGEEGEEEEEEDEEEEK) has biased composition (acidic residues). The segment covering 151–161 (SRESPQETNPP) has biased composition (polar residues). A compositionally biased stretch (basic and acidic residues) spans 166 to 189 (EAAREAGGGKDGCREDRVENETRP). Zn(2+) contacts are provided by Cys313, Cys316, Cys328, Cys331, Cys337, Cys341, His355, and Cys359. Residues 313 to 359 (CHVCHRHSFEAKLTPCPQCSAVLYCGEACLRADWQRCPDDVSHRFWC) form an MYND-type zinc finger. 2 disordered regions span residues 565–590 (EVSVRPGSGISARPSSGTKEKGGRRD) and 701–742 (QGSG…RRRK). Positions 708–724 (APGPPPPSPTPSAPPAP) are enriched in pro residues. A compositionally biased stretch (basic residues) spans 725–742 (TRRRRGEKKPGRGARRRK).

As to quaternary structure, interacts with HDAC1, HDAC3, HDAC6 and, to a lesser extent, with HDAC7.

The protein resides in the nucleus. It localises to the cytoplasm. In terms of biological role, acts as a transcriptional repressor through interaction with histone deacetylases (HDACs). May be important for spermiogenesis. The chain is Zinc finger MYND domain-containing protein 15 (ZMYND15) from Homo sapiens (Human).